We begin with the raw amino-acid sequence, 113 residues long: Small ribosomal subunit protein uS17 (113 aa).

It belongs to the universal ribosomal protein uS17 family. In terms of assembly, part of the 30S ribosomal subunit.

Its function is as follows. One of the primary rRNA binding proteins, it binds specifically to the 5'-end of 16S ribosomal RNA. The protein is Small ribosomal subunit protein uS17 of Nanoarchaeum equitans (strain Kin4-M).